Consider the following 744-residue polypeptide: 5-methyltetrahydropteroyltriglutamate--homocysteine methyltransferase (744 aa).

5-methyltetrahydropteroyltri-L-glutamate is bound by residues arginine 17–lysine 20 and lysine 110. Residues isoleucine 422–serine 424 and glutamate 475 contribute to the L-homocysteine site. Residues isoleucine 422–serine 424 and glutamate 475 contribute to the L-methionine site. Tryptophan 552 lines the 5-methyltetrahydropteroyltri-L-glutamate pocket. An L-homocysteine-binding site is contributed by aspartate 590. Residue aspartate 590 participates in L-methionine binding. Glutamate 596 serves as a coordination point for 5-methyltetrahydropteroyltri-L-glutamate. Positions 632, 634, and 656 each coordinate Zn(2+). Histidine 685 functions as the Proton donor in the catalytic mechanism. Cysteine 717 provides a ligand contact to Zn(2+).

This sequence belongs to the vitamin-B12 independent methionine synthase family. The cofactor is Zn(2+).

It carries out the reaction 5-methyltetrahydropteroyltri-L-glutamate + L-homocysteine = tetrahydropteroyltri-L-glutamate + L-methionine. It participates in amino-acid biosynthesis; L-methionine biosynthesis via de novo pathway; L-methionine from L-homocysteine (MetE route): step 1/1. Catalyzes the transfer of a methyl group from 5-methyltetrahydrofolate to homocysteine resulting in methionine formation. The polypeptide is 5-methyltetrahydropteroyltriglutamate--homocysteine methyltransferase (Trichodesmium erythraeum (strain IMS101)).